Here is a 177-residue protein sequence, read N- to C-terminus: Large ribosomal subunit protein uL6 (177 aa).

Belongs to the universal ribosomal protein uL6 family. Part of the 50S ribosomal subunit.

Functionally, this protein binds to the 23S rRNA, and is important in its secondary structure. It is located near the subunit interface in the base of the L7/L12 stalk, and near the tRNA binding site of the peptidyltransferase center. This Vibrio campbellii (strain ATCC BAA-1116) protein is Large ribosomal subunit protein uL6.